A 60-amino-acid chain; its full sequence is MSSIWPPQKKVFTVGFITGGVTPVMVSFVWPAAQPQKKINYSRKKKYFRPRSFYKKNVSF.

Residues 11–33 form a helical membrane-spanning segment; that stretch reads VFTVGFITGGVTPVMVSFVWPAA. Residues Asn40 and Asn57 are each glycosylated (N-linked (GlcNAc...) asparagine; by host).

The protein localises to the host membrane. This is an uncharacterized protein from African swine fever virus (strain Badajoz 1971 Vero-adapted) (Ba71V).